Here is a 241-residue protein sequence, read N- to C-terminus: Carboxy-S-adenosyl-L-methionine synthase (241 aa).

S-adenosyl-L-methionine is bound by residues Tyr38, Gly63–Ser65, Asp88–Asn89, Asp116–Ile117, Asn131, and Arg198.

This sequence belongs to the class I-like SAM-binding methyltransferase superfamily. Cx-SAM synthase family. In terms of assembly, homodimer.

It catalyses the reaction prephenate + S-adenosyl-L-methionine = carboxy-S-adenosyl-L-methionine + 3-phenylpyruvate + H2O. Catalyzes the conversion of S-adenosyl-L-methionine (SAM) to carboxy-S-adenosyl-L-methionine (Cx-SAM). This Haemophilus influenzae (strain PittEE) protein is Carboxy-S-adenosyl-L-methionine synthase.